The sequence spans 658 residues: DNA mismatch repair protein MutL (658 aa).

Disordered stretches follow at residues 114–137 (RQNDSSHATQVKAEDGKLSSPTAA) and 437–456 (RFGNMPSETPAPQTDTPLSD). The span at 442 to 456 (PSETPAPQTDTPLSD) shows a compositional bias: polar residues.

The protein belongs to the DNA mismatch repair MutL/HexB family.

Functionally, this protein is involved in the repair of mismatches in DNA. It is required for dam-dependent methyl-directed DNA mismatch repair. May act as a 'molecular matchmaker', a protein that promotes the formation of a stable complex between two or more DNA-binding proteins in an ATP-dependent manner without itself being part of a final effector complex. The polypeptide is DNA mismatch repair protein MutL (Neisseria meningitidis serogroup B (strain ATCC BAA-335 / MC58)).